The following is a 360-amino-acid chain: Photosystem II protein D1 (360 aa).

3 helical membrane passes run 29-46 (YIGWFGVIMIPTLLTATT), 118-133 (HFLLGVFCYLGRQWEL), and 142-156 (WICVAYSAPVSAATA). His118 serves as a coordination point for chlorophyll a. Tyr126 serves as a coordination point for pheophytin a. [CaMn4O5] cluster contacts are provided by Asp170 and Glu189. Residues 197-218 (FHMLGVAGVFGGSLFSAMHGSL) form a helical membrane-spanning segment. His198 contributes to the chlorophyll a binding site. Residues His215 and 264 to 265 (SF) each bind a quinone. Residue His215 participates in Fe cation binding. His272 lines the Fe cation pocket. Residues 274 to 288 (FLGAWPVIGIWFTAM) form a helical membrane-spanning segment. [CaMn4O5] cluster is bound by residues His332, Glu333, Asp342, and Ala344. Residues 345–360 (SGEQAPVALIAPAING) constitute a propeptide that is removed on maturation.

It belongs to the reaction center PufL/M/PsbA/D family. As to quaternary structure, PSII is composed of 1 copy each of membrane proteins PsbA, PsbB, PsbC, PsbD, PsbE, PsbF, PsbH, PsbI, PsbJ, PsbK, PsbL, PsbM, PsbT, PsbX, PsbY, PsbZ, Psb30/Ycf12, peripheral proteins PsbO, CyanoQ (PsbQ), PsbU, PsbV and a large number of cofactors. It forms dimeric complexes. The D1/D2 heterodimer binds P680, chlorophylls that are the primary electron donor of PSII, and subsequent electron acceptors. It shares a non-heme iron and each subunit binds pheophytin, quinone, additional chlorophylls, carotenoids and lipids. D1 provides most of the ligands for the Mn4-Ca-O5 cluster of the oxygen-evolving complex (OEC). There is also a Cl(-1) ion associated with D1 and D2, which is required for oxygen evolution. The PSII complex binds additional chlorophylls, carotenoids and specific lipids. is required as a cofactor. In terms of processing, tyr-161 forms a radical intermediate that is referred to as redox-active TyrZ, YZ or Y-Z. C-terminally processed by CtpA; processing is essential to allow assembly of the oxygen-evolving complex and thus photosynthetic growth.

The protein localises to the cellular thylakoid membrane. It carries out the reaction 2 a plastoquinone + 4 hnu + 2 H2O = 2 a plastoquinol + O2. Photosystem II (PSII) is a light-driven water:plastoquinone oxidoreductase that uses light energy to abstract electrons from H(2)O, generating O(2) and a proton gradient subsequently used for ATP formation. It consists of a core antenna complex that captures photons, and an electron transfer chain that converts photonic excitation into a charge separation. The D1/D2 (PsbA/PsbD) reaction center heterodimer binds P680, the primary electron donor of PSII as well as several subsequent electron acceptors. The chain is Photosystem II protein D1 from Microcystis aeruginosa (strain NIES-843 / IAM M-2473).